We begin with the raw amino-acid sequence, 3097 residues long: Neural-cadherin (3097 aa).

Residues 1 to 36 (MAARRCLNQLRQRYITNRFNICTCAIFLISLPFILA) form the signal peptide. 2 N-linked (GlcNAc...) asparagine glycosylation sites follow: Asn97 and Asn150. The Cadherin 1 domain occupies 181-305 (VRENQPAGTR…LDENDNRPIF (125 aa)). Asn325 and Asn426 each carry an N-linked (GlcNAc...) asparagine glycan. 15 consecutive Cadherin domains span residues 430–543 (HREK…PPYF), 554–651 (VQLN…APQF), 660–756 (IPEN…APKF), 766–858 (VDED…EPKF), 867–968 (VDEN…KPVF), 978–1078 (VEEG…PPLF), 1087–1183 (VKQD…PPVW), 1193–1299 (VKEN…IPLF), 1307–1414 (VLEG…PPYF), 1423–1514 (VDEN…PPVF), 1523–1630 (ITEE…APIF), 1639–1742 (VTEN…PPQF), 1749–1861 (TEVD…KPHF), 1870–1966 (VFED…APKF), and 1974–2085 (LPEH…QPGS). An N-linked (GlcNAc...) asparagine glycan is attached at Asn930. Residue Asn1266 is glycosylated (N-linked (GlcNAc...) asparagine). 11 cysteine pairs are disulfide-bonded: Cys2346/Cys2357, Cys2351/Cys2366, Cys2368/Cys2377, Cys2559/Cys2585, Cys2592/Cys2607, Cys2601/Cys2616, Cys2618/Cys2627, Cys2787/Cys2822, Cys2869/Cys2880, Cys2874/Cys2891, and Cys2893/Cys2902. The EGF-like 1 domain occupies 2346 to 2377 (CRTTPCHNGGRCVDTRFGPHCSCPVGYTGPRC). Positions 2379–2585 (QTTRSFRGNG…GLSRNSVAGC (207 aa)) constitute a Laminin G-like 1 domain. Residues 2592–2627 (CAQTETTARCWEHGNCVGSLSEARCHCRPGWTGPAC) form the EGF-like 2 domain. One can recognise a Laminin G-like 2 domain in the interval 2631 to 2822 (TIPTTFKAQS…TMARNLEKGC (192 aa)). In terms of domain architecture, EGF-like 3 spans 2869–2902 (CLDMPCMNGATCINLEPRLRYRCICPDGFWGENC). Residues 2917-2937 (ALAAILVCLLIILILVLVFVV) form a helical membrane-spanning segment. Residues 2938 to 3097 (YNRRREAHIK…PNPHNTELEL (160 aa)) lie on the Cytoplasmic side of the membrane.

In the embryo, the protein first appears in the mesoderm at stage 9 and is present in the myoblasts and muscle fibers by stage 12 and stage 14, respectively. At stage 12 the protein is also located in the axons of the entire CNS, but not in the glial cells. In third instar larvae protein is expressed in the CNS neuropile, photoreceptor axons and precursors of adult muscles.

The protein localises to the cell membrane. Functionally, cadherins are calcium-dependent cell adhesion proteins. They preferentially interact with themselves in a homophilic manner in connecting cells; cadherins may thus contribute to the sorting of heterogeneous cell types. May associate with arm neural isoform and participate in the transmission of developmental information. The polypeptide is Neural-cadherin (CadN) (Drosophila melanogaster (Fruit fly)).